The primary structure comprises 283 residues: Bifunctional protein FolD 2 (283 aa).

NADP(+)-binding positions include 165–167 (GAS), serine 190, and isoleucine 231.

Belongs to the tetrahydrofolate dehydrogenase/cyclohydrolase family. As to quaternary structure, homodimer.

It catalyses the reaction (6R)-5,10-methylene-5,6,7,8-tetrahydrofolate + NADP(+) = (6R)-5,10-methenyltetrahydrofolate + NADPH. The enzyme catalyses (6R)-5,10-methenyltetrahydrofolate + H2O = (6R)-10-formyltetrahydrofolate + H(+). The protein operates within one-carbon metabolism; tetrahydrofolate interconversion. Functionally, catalyzes the oxidation of 5,10-methylenetetrahydrofolate to 5,10-methenyltetrahydrofolate and then the hydrolysis of 5,10-methenyltetrahydrofolate to 10-formyltetrahydrofolate. This is Bifunctional protein FolD 2 from Bordetella pertussis (strain Tohama I / ATCC BAA-589 / NCTC 13251).